The chain runs to 219 residues: Transmembrane protein 17A (219 aa).

Asparagine 18 and asparagine 27 each carry an N-linked (GlcNAc...) asparagine glycan. 4 consecutive transmembrane segments (helical) span residues 56 to 76 (MMLY…LLML), 83 to 103 (LPVY…IFEV), 121 to 141 (LAGF…FFIT), and 153 to 173 (AVHS…FLAL).

Belongs to the TMEM17 family. Part of the tectonic-like complex (also named B9 complex).

Its subcellular location is the cell projection. It is found in the cilium membrane. In terms of biological role, transmembrane component of the tectonic-like complex, a complex localized at the transition zone of primary cilia and acting as a barrier that prevents diffusion of transmembrane proteins between the cilia and plasma membranes. Required for ciliogenesis and sonic hedgehog/SHH signaling. This Danio rerio (Zebrafish) protein is Transmembrane protein 17A (tmem17a).